A 135-amino-acid chain; its full sequence is S-protein homolog 29 (135 aa).

The first 24 residues, Met-1 to Gly-24, serve as a signal peptide directing secretion. N-linked (GlcNAc...) asparagine glycosylation is present at Asn-110.

It belongs to the plant self-incompatibility (S1) protein family.

It is found in the secreted. This Arabidopsis thaliana (Mouse-ear cress) protein is S-protein homolog 29.